A 424-amino-acid chain; its full sequence is Phosphomethylpyrimidine synthase (424 aa).

Substrate-binding positions include N66, M95, Y124, H163, 185–187 (SRG), 226–229 (DGMR), and E265. Position 269 (H269) interacts with Zn(2+). Residue F292 participates in substrate binding. H333 lines the Zn(2+) pocket. [4Fe-4S] cluster-binding residues include C408, C411, and C415.

It belongs to the ThiC family. It depends on [4Fe-4S] cluster as a cofactor.

It catalyses the reaction 5-amino-1-(5-phospho-beta-D-ribosyl)imidazole + S-adenosyl-L-methionine = 4-amino-2-methyl-5-(phosphooxymethyl)pyrimidine + CO + 5'-deoxyadenosine + formate + L-methionine + 3 H(+). Its pathway is cofactor biosynthesis; thiamine diphosphate biosynthesis. In terms of biological role, catalyzes the synthesis of the hydroxymethylpyrimidine phosphate (HMP-P) moiety of thiamine from aminoimidazole ribotide (AIR) in a radical S-adenosyl-L-methionine (SAM)-dependent reaction. In Thermotoga sp. (strain RQ2), this protein is Phosphomethylpyrimidine synthase.